We begin with the raw amino-acid sequence, 305 residues long: MGSSLYDILTIVMIAEFIFGNVTNGFIVLTNCIAWLSKRTLSFIGWIQLFLAISRVVLIWEMLLAWLKYMKYSFSYLAGTELRVMMLTWVVSNHFSLWLATILSIFYLLKIASFSRPVFLYLKWRVKKVLLLILLGNLIFLMFNILQINTHIEDWMDQYKRNITWDSRVNEFVGFSNLVLLEMIMFSVTPFTVALVSFILLIFSLWKHLQKMHLSSRGERDPSTKAHVNALRIMVSFLLLYATYFISFFISLIPMAHKKGLDLMFSLTVGLFYPSSHSFILILGHSNLRHSSCLVITYLRCKEKD.

The Extracellular portion of the chain corresponds to M1–D7. A helical membrane pass occupies residues I8–V28. The Cytoplasmic segment spans residues L29 to S42. The helical transmembrane segment at F43 to L63 threads the bilayer. Residues L64 to T88 lie on the Extracellular side of the membrane. Residues W89–L109 form a helical membrane-spanning segment. Residues K110–K128 lie on the Cytoplasmic side of the membrane. Residues V129–N149 form a helical membrane-spanning segment. Over T150–E182 the chain is Extracellular. N162 carries N-linked (GlcNAc...) asparagine glycosylation. Residues M183–F203 traverse the membrane as a helical segment. At S204 to R232 the chain is on the cytoplasmic side. The helical transmembrane segment at I233–I253 threads the bilayer. Residues P254–D262 are Extracellular-facing. The helical transmembrane segment at L263–L283 threads the bilayer. At G284–D305 the chain is on the cytoplasmic side.

This sequence belongs to the G-protein coupled receptor T2R family. As to expression, expressed in subsets of taste receptor cells of the tongue and palate epithelium and exclusively in gustducin-positive cells. Expressed in 15% taste bud cells in circumvallate and foliate papillae but only in 2% in fungiform papillae. Expressed in the duodenum, antrum and fundus (part of the stomach).

The protein resides in the membrane. Functionally, receptor that may play a role in the perception of bitterness and is gustducin-linked. May play a role in sensing the chemical composition of the gastrointestinal content. The activity of this receptor may stimulate alpha gustducin, mediate PLC-beta-2 activation and lead to the gating of TRPM5. In Rattus norvegicus (Rat), this protein is Taste receptor type 2 member 13 (Tas2r13).